Consider the following 1217-residue polypeptide: ATP-dependent helicase/nuclease subunit A (1217 aa).

Residues 10–475 (VIWTDAQWQS…IDLSQNFRSR (466 aa)) enclose the UvrD-like helicase ATP-binding domain. Residue 31 to 38 (AAAGSGKT) coordinates ATP. Positions 476 to 786 (KEVLSTTNYI…RMMTIHSSKG (311 aa)) constitute a UvrD-like helicase C-terminal domain.

This sequence belongs to the helicase family. AddA subfamily. Heterodimer of AddA and AddB/RexB. The cofactor is Mg(2+).

It catalyses the reaction Couples ATP hydrolysis with the unwinding of duplex DNA by translocating in the 3'-5' direction.. It carries out the reaction ATP + H2O = ADP + phosphate + H(+). The heterodimer acts as both an ATP-dependent DNA helicase and an ATP-dependent, dual-direction single-stranded exonuclease. Recognizes the chi site generating a DNA molecule suitable for the initiation of homologous recombination. The AddA nuclease domain is required for chi fragment generation; this subunit has the helicase and 3' -&gt; 5' nuclease activities. In Staphylococcus aureus (strain USA300), this protein is ATP-dependent helicase/nuclease subunit A.